A 597-amino-acid chain; its full sequence is MDHIRNFSIIAHIDHGKSTLADRIIQICGGLSDREMESQVLDSMDLERERGITIKAQTAALTYKARDGQVYNLNMIDTPGHVDFSYEVSRSLSACEGALLVVDASQGVEAQTVANCYTAIELGVDVIPVLNKIDLPAANPENAIAEIEDVIGIDATDATRCSAKTGLGVEDVLEALVAKVPPPKGDPEAPLQALIIDSWFDNYVGVVMLVRIVNGTLRPKDKIRMMATGAQYPVEHIGVFTPKSKNLESLSAGQVGFIIAGIKELAAAKVGDTVTLVNRPAAEPLPGFKEVKPQVFAGLYPVEANQYDALRDSLEKLKLNDASLMYEPEVSQALGFGFRCGFLGLLHMEIVQERLEREFDMDLITTAPTVVYEVLQRDGTTIMVENPAKMPEPSKIEEVREPIVTVNLYMPQDYVGSVITLCTQKRGTQINMQYHGRQVQLTYEIPMGEVVLDFFDRLKSISRGYASMDYEFKEYRAADVVKVDMLINGDKVDALSVIVHRSQSQYRGREVASKMRELIPRQMYDVAIQATIGANIIARENIKALRKNVLAKCYGGDISRKKKLLEKQKAGKKRMKQVGSVEIPQEAFLAILRVEDK.

A tr-type G domain is found at 2 to 184 (DHIRNFSIIA…ALVAKVPPPK (183 aa)). Residues 14-19 (DHGKST) and 131-134 (NKID) each bind GTP.

It belongs to the TRAFAC class translation factor GTPase superfamily. Classic translation factor GTPase family. LepA subfamily.

The protein localises to the cell inner membrane. It carries out the reaction GTP + H2O = GDP + phosphate + H(+). Functionally, required for accurate and efficient protein synthesis under certain stress conditions. May act as a fidelity factor of the translation reaction, by catalyzing a one-codon backward translocation of tRNAs on improperly translocated ribosomes. Back-translocation proceeds from a post-translocation (POST) complex to a pre-translocation (PRE) complex, thus giving elongation factor G a second chance to translocate the tRNAs correctly. Binds to ribosomes in a GTP-dependent manner. The chain is Elongation factor 4 from Paraburkholderia xenovorans (strain LB400).